The chain runs to 207 residues: MSRYTGSIYRKARRLNFSILESGKEFTNNKSKKGVKVPGQHGSLIRPKLSNYGEQLQEKQKMQFMYGLNDRQFRRLFAVSKKMSGILTMNLFRTLESRLDNLVFRMGFAPTRRGARQLVSHGHVLVNGKTFDIPSALISLGSVVELKPRAHNLPLVKLALESKAVAPFVEVNKKTLSGTYVRYPERNELPADVNETYVVEYYKRLVK.

The S4 RNA-binding domain occupies 97 to 165; that stretch reads SRLDNLVFRM…VKLALESKAV (69 aa).

It belongs to the universal ribosomal protein uS4 family. As to quaternary structure, part of the 30S ribosomal subunit. Contacts protein S5. The interaction surface between S4 and S5 is involved in control of translational fidelity.

In terms of biological role, one of the primary rRNA binding proteins, it binds directly to 16S rRNA where it nucleates assembly of the body of the 30S subunit. With S5 and S12 plays an important role in translational accuracy. In Mycoplasmoides gallisepticum (strain R(low / passage 15 / clone 2)) (Mycoplasma gallisepticum), this protein is Small ribosomal subunit protein uS4.